Reading from the N-terminus, the 546-residue chain is Chaperonin GroEL (546 aa).

ATP contacts are provided by residues 29-32, lysine 50, 86-90, glycine 415, and aspartate 495; these read TLGP and DGTTT.

Belongs to the chaperonin (HSP60) family. Forms a cylinder of 14 subunits composed of two heptameric rings stacked back-to-back. Interacts with the co-chaperonin GroES.

It is found in the cytoplasm. It catalyses the reaction ATP + H2O + a folded polypeptide = ADP + phosphate + an unfolded polypeptide.. Functionally, together with its co-chaperonin GroES, plays an essential role in assisting protein folding. The GroEL-GroES system forms a nano-cage that allows encapsulation of the non-native substrate proteins and provides a physical environment optimized to promote and accelerate protein folding. The protein is Chaperonin GroEL of Parabacteroides distasonis (strain ATCC 8503 / DSM 20701 / CIP 104284 / JCM 5825 / NCTC 11152).